Here is an 861-residue protein sequence, read N- to C-terminus: ToMV susceptible protein tm-2 (861 aa).

Residues valine 63 to aspartate 83 adopt a coiled-coil conformation. The 227-residue stretch at aspartate 162–aspartate 388 folds into the NB-ARC domain. Glycine 185 to threonine 192 provides a ligand contact to ATP. LRR repeat units lie at residues leucine 225–serine 248, leucine 305–phenylalanine 327, aspartate 388–tyrosine 411, leucine 449–glycine 472, valine 510–lysine 536, methionine 585–leucine 608, threonine 609–serine 631, isoleucine 652–proline 680, leucine 689–lysine 713, tyrosine 735–proline 758, leucine 781–glutamate 804, and phenylalanine 810–methionine 835.

The protein belongs to the disease resistance NB-LRR family. (Microbial infection) Fails to interact with the tobamovirus mouvement protein of tobacco mosaic virus (TMV).

It localises to the cell membrane. Its function is as follows. Potential inhibitor of viral mouvements which may confer resistance to some tobamoviruses but not to the tomato mosaic virus (ToMV) and tobacco mosaic virus (TMV). This Solanum lycopersicum (Tomato) protein is ToMV susceptible protein tm-2.